Here is a 644-residue protein sequence, read N- to C-terminus: uncharacterized protein (644 aa).

The tract at residues 123 to 644 (VSQQIQHDQH…AVGKKKPTKK (522 aa)) is disordered. Over residues 133-155 (PQYNKHPQNNHHPQNTQHSQNNP) the composition is skewed to low complexity. Basic and acidic residues predominate over residues 159-174 (NINESENKEDLSDRSS). A compositionally biased stretch (polar residues) spans 175 to 191 (DSANSEESHNSQYSQDS). Positions 192–204 (GDSRNYQDSEDNK) are enriched in basic and acidic residues. Over residues 216–233 (NKLIVQRLTNPKITPDTI) the composition is skewed to polar residues. Basic and acidic residues-rich tracts occupy residues 236-249 (SNKD…KDLS) and 256-279 (SIKD…KSKE). 2 stretches are compositionally biased toward acidic residues: residues 292 to 301 (DGDDLDDLGN) and 310 to 338 (SDYE…DDSN). A compositionally biased stretch (low complexity) spans 367–400 (KSPSNSKKSKTNQKLSQSSKKISSKTITNSGSKS). Residues 447-476 (SDDSDNESDNESDNESNNDSDNETDSEIDD) are compositionally biased toward acidic residues. Residues 496 to 531 (PKTPMKPNNKTTSVSKPVSKPPVKSSIKNNTKNNKP) show a composition bias toward low complexity. Basic and acidic residues predominate over residues 544–558 (KQKDQSESQSDKDID). Residues 585 to 594 (PPKSVSLPSS) are compositionally biased toward low complexity. The span at 607-630 (TAKTQNKSKSQPKTNGSKTSTKSI) shows a compositional bias: polar residues.

This is an uncharacterized protein from Acanthamoeba polyphaga mimivirus (APMV).